Reading from the N-terminus, the 447-residue chain is tRNA-2-methylthio-N(6)-dimethylallyladenosine synthase (447 aa).

Residues 10 to 128 (KLFCISTYGC…FPEYLHRVLQ (119 aa)) form the MTTase N-terminal domain. Cys-19, Cys-55, Cys-89, Cys-165, Cys-169, and Cys-172 together coordinate [4Fe-4S] cluster. The region spanning 151–382 (RKSDVKAFVT…EAINKKVVIK (232 aa)) is the Radical SAM core domain. The TRAM domain maps to 384–447 (KEYEGKVVEV…PFSLIGEIVE (64 aa)).

This sequence belongs to the methylthiotransferase family. MiaB subfamily. In terms of assembly, monomer. [4Fe-4S] cluster is required as a cofactor.

It localises to the cytoplasm. It carries out the reaction N(6)-dimethylallyladenosine(37) in tRNA + (sulfur carrier)-SH + AH2 + 2 S-adenosyl-L-methionine = 2-methylsulfanyl-N(6)-dimethylallyladenosine(37) in tRNA + (sulfur carrier)-H + 5'-deoxyadenosine + L-methionine + A + S-adenosyl-L-homocysteine + 2 H(+). Catalyzes the methylthiolation of N6-(dimethylallyl)adenosine (i(6)A), leading to the formation of 2-methylthio-N6-(dimethylallyl)adenosine (ms(2)i(6)A) at position 37 in tRNAs that read codons beginning with uridine. This chain is tRNA-2-methylthio-N(6)-dimethylallyladenosine synthase, found in Clostridium perfringens (strain SM101 / Type A).